Consider the following 508-residue polypeptide: ATP synthase subunit alpha, chloroplastic (508 aa).

173–180 is a binding site for ATP; it reads GDRQTGKT.

It belongs to the ATPase alpha/beta chains family. As to quaternary structure, F-type ATPases have 2 components, CF(1) - the catalytic core - and CF(0) - the membrane proton channel. CF(1) has five subunits: alpha(3), beta(3), gamma(1), delta(1), epsilon(1). CF(0) has four main subunits: a, b, b' and c.

The protein localises to the plastid. The protein resides in the chloroplast thylakoid membrane. It carries out the reaction ATP + H2O + 4 H(+)(in) = ADP + phosphate + 5 H(+)(out). Its function is as follows. Produces ATP from ADP in the presence of a proton gradient across the membrane. The alpha chain is a regulatory subunit. The protein is ATP synthase subunit alpha, chloroplastic of Chara vulgaris (Common stonewort).